A 274-amino-acid chain; its full sequence is HTH-type transcriptional regulator GadX (274 aa).

One can recognise an HTH araC/xylS-type domain in the interval 145–242; the sequence is TRVCTVINNN…GMTPTEYQER (98 aa). DNA-binding regions (H-T-H motif) lie at residues 162 to 183 and 209 to 232; these read ARIASELLMSPSLLKKKLREEE and IKRVAVSCGYHSVSYFIYVFRNYY.

As to quaternary structure, homodimer.

Functionally, positively regulates the expression of about fifteen genes involved in acid resistance such as gadA, gadB and gadC. Depending on the conditions (growth phase and medium), can repress gadW. This is HTH-type transcriptional regulator GadX (gadX) from Shigella flexneri.